We begin with the raw amino-acid sequence, 95 residues long: Opiscorpine-4 (95 aa).

The first 19 residues, 1–19 (MNNKLTALIFLGLLAIASC), serve as a signal peptide directing secretion. One can recognise a BetaSPN-type CS-alpha/beta domain in the interval 55–95 (EFMCVANIDMTKSCDTHCQKASGEKGYCHGTKCKCGVPLSY). 3 disulfide bridges follow: Cys-58/Cys-82, Cys-68/Cys-87, and Cys-72/Cys-89.

Belongs to the long chain scorpion toxin family. Class 3 subfamily. As to expression, expressed by the venom gland.

Its subcellular location is the secreted. Functionally, has antimicrobial activity against yeasts and bacteria. In Opistophthalmus carinatus (African yellow leg scorpion), this protein is Opiscorpine-4.